The following is a 430-amino-acid chain: Mannan endo-1,4-beta-mannosidase (430 aa).

The Proton donor role is filled by E173. Residue E269 is the Nucleophile of the active site. CBM10 domains follow at residues 357 to 390 and 395 to 424; these read SCGTAPNGYPYCCNASSATGNGWGWENNRSCVVA and SCNWYGTSYPICVNTSSGWGWENNRSCIAA.

This sequence belongs to the glycosyl hydrolase 5 (cellulase A) family.

It carries out the reaction Random hydrolysis of (1-&gt;4)-beta-D-mannosidic linkages in mannans, galactomannans and glucomannans.. Catalyzes the endo hydrolysis of beta-1,4-linked mannan, galactomannan and glucomannan. It is able to hydrolyze mannosidic linkages that are flanked by mannose or glucose. This is Mannan endo-1,4-beta-mannosidase from Cellvibrio japonicus (strain Ueda107) (Pseudomonas fluorescens subsp. cellulosa).